The sequence spans 150 residues: Arginine repressor (150 aa).

Belongs to the ArgR family.

It localises to the cytoplasm. The protein operates within amino-acid biosynthesis; L-arginine biosynthesis [regulation]. Regulates arginine biosynthesis genes. This chain is Arginine repressor, found in Clostridium botulinum (strain 657 / Type Ba4).